Consider the following 516-residue polypeptide: Acetylcholine receptor subunit delta (516 aa).

The first 21 residues, methionine 1–glycine 21, serve as a signal peptide directing secretion. Residues leucine 22–lysine 244 are Extracellular-facing. N-linked (GlcNAc...) asparagine glycosylation is found at asparagine 96 and asparagine 163. Cysteine 150 and cysteine 164 are disulfide-bonded. Helical transmembrane passes span proline 245 to leucine 269, methionine 279 to lysine 296, and phenylalanine 311 to isoleucine 332. At histidine 333–arginine 470 the chain is on the cytoplasmic side. Tyrosine 389 bears the Phosphotyrosine; by Tyr-kinases mark. Residues leucine 471–tyrosine 493 form a helical membrane-spanning segment.

The protein belongs to the ligand-gated ion channel (TC 1.A.9) family. Acetylcholine receptor (TC 1.A.9.1) subfamily. Delta/CHRND sub-subfamily. In terms of assembly, pentamer of two alpha chains, and one each of the beta, delta, and gamma (in immature muscle) or epsilon (in mature muscle) chains. The muscle heteropentamer composed of alpha-1, beta-1, delta, epsilon subunits interacts with the alpha-conotoxin ImII.

The protein localises to the postsynaptic cell membrane. Its subcellular location is the cell membrane. The enzyme catalyses K(+)(in) = K(+)(out). It carries out the reaction Na(+)(in) = Na(+)(out). In terms of biological role, after binding acetylcholine, the AChR responds by an extensive change in conformation that affects all subunits and leads to opening of an ion-conducting channel across the plasma membrane. The chain is Acetylcholine receptor subunit delta (CHRND) from Bos taurus (Bovine).